We begin with the raw amino-acid sequence, 725 residues long: Homeobox-leucine zipper protein HDG3 (725 aa).

Residues 1–74 (MSQSNMVPVA…PRHKKKKYNR (74 aa)) are disordered. Low complexity predominate over residues 11–40 (NNGDNNNDNENNNNNNNNGGTDNTNAGNDS). Positions 46-64 (DSGNTSSGNHGEGLGNNQA) are enriched in polar residues. Basic residues predominate over residues 65–74 (PRHKKKKYNR). Residues 68-127 (KKKKYNRHTQLQISEMEAFFRECPHPDDKQRYDLSAQLGLDPVQIKFWFQNKRTQNKNQQ) constitute a DNA-binding region (homeobox). Positions 117–201 (QNKRTQNKNQ…SVTAEKISRL (85 aa)) form a coiled coil. The START domain occupies 243-475 (DANTKPIIME…LVRQCERISS (233 aa)).

The protein belongs to the HD-ZIP homeobox family. Class IV subfamily. In terms of assembly, interacts with AIL7/PLT7, ANT, BBM and AIL1. In terms of tissue distribution, expressed in siliques.

It is found in the nucleus. Functionally, probable transcription factor. Seems to promote cell differentiation. The protein is Homeobox-leucine zipper protein HDG3 of Arabidopsis thaliana (Mouse-ear cress).